We begin with the raw amino-acid sequence, 258 residues long: MEEKAKMRRLSTWKLKLRMFLATVLLFGLIYAILMVVGSILGLGGPLFYALLGFGVIFLQYLISPKIVELTMNVHYVSEAEAPRLHAMVDELARRAGIPKPMVGIAEIALPNAFAFGRTKADGRVCVTRGILNLLDEEELRAVLGHEISHIKHSDMIVMTLVSAVPLICYYIFWSTVFSRDDEANLVGIAALIAYFIGQLIVLFISRTREYYADQGSVEIGGQPHKLASALYKLVLRLSPVQQGRPETGRGCQGLLPE.

The next 2 helical transmembrane spans lie at 24–44 (VLLF…LGLG) and 45–65 (GPLF…LISP). A Zn(2+)-binding site is contributed by His146. The active site involves Glu147. His150 serves as a coordination point for Zn(2+). 2 consecutive transmembrane segments (helical) span residues 157–177 (IVMT…WSTV) and 186–206 (LVGI…LFIS). Glu210 lines the Zn(2+) pocket.

Belongs to the peptidase M48B family. Zn(2+) serves as cofactor.

It is found in the cell membrane. The chain is Protease HtpX homolog from Methanothermobacter thermautotrophicus (strain ATCC 29096 / DSM 1053 / JCM 10044 / NBRC 100330 / Delta H) (Methanobacterium thermoautotrophicum).